A 264-amino-acid chain; its full sequence is ATP synthase subunit a (264 aa).

A run of 7 helical transmembrane segments spans residues 30–50, 90–110, 111–131, 134–154, 177–197, 208–228, and 235–255; these read WNIDSLLFSVGLGMLFLWLFY, IAPLALTIFVWIFMMNFMDMI, PVDWLPSLALLAGVPYLKVVP, DVNITFSLALGVFVLIIYYSI, IPVNLLLETVTLVAKPISLAL, LIFILIALMYGSNVALSALGV, and LIFHILVITLQAFIFMMLTIV.

It belongs to the ATPase A chain family. In terms of assembly, F-type ATPases have 2 components, CF(1) - the catalytic core - and CF(0) - the membrane proton channel. CF(1) has five subunits: alpha(3), beta(3), gamma(1), delta(1), epsilon(1). CF(0) has three main subunits: a(1), b(2) and c(9-12). The alpha and beta chains form an alternating ring which encloses part of the gamma chain. CF(1) is attached to CF(0) by a central stalk formed by the gamma and epsilon chains, while a peripheral stalk is formed by the delta and b chains.

Its subcellular location is the cell inner membrane. Functionally, key component of the proton channel; it plays a direct role in the translocation of protons across the membrane. The protein is ATP synthase subunit a of Shewanella frigidimarina (strain NCIMB 400).